The following is a 608-amino-acid chain: MSAISLINSGVAWFVAAAVLAFLFSFQKALSGWIAGIGGAVGSLYTAAAGFTVLTGAVGVSGALSLVSYDVQISPLNAIWLITLGLCGLFVSLYNIDWHRHAQVKCNGLQINMLMAAAVCAVIASNLGMFVVMAEIMALCAVFLTSNSKEGKLWFALGRLGTLLLAIACWLLWQRYGTLDLRLLDMRMQQLPLGSDIWLLGVIGFGLLAGIIPLHGWVPQAHANASAPAAALFSTVVMKIGLLGILTLSLLGGNAPLWWGIALLVLGMITAFVGGLYALVEHNIQRLLAYHTLENIGIILLGLGAGVTGIALEQPALIALGLVGGLYHLLNHSLFKSVLFLGAGSVWFRTGHRDIEKLGGIGKKMPVISIAMLVGLMAMAALPPLNGFAGEWVIYQSFFKLSNSGAFVARLLGPLLAVGLAITGALAVMCMAKVYGVTFLGAPRTKEAENATCAPLLMSVSVVALAICCVIGGVAAPWLLPMLSAAVPLPLEPANTTVSQPMITLLLIACPLLPFIIMAICKGDRLPSRSRGAAWVCGYDHEKSMVITAHGFAMPVKQAFAPVLKLRKWLNPVSLVPGWQCEGSALLFRRMALVELAVLVVIIVSRGA.

12 helical membrane-spanning segments follow: residues 10 to 26 (GVAW…LFSF), 44 to 67 (LYTA…LSLV), 76 to 93 (LNAI…FVSL), 116 to 140 (AAAV…MALC), 153 to 173 (LWFA…WLLW), 197 to 218 (IWLL…HGWV), 229 to 251 (AAAL…LSLL), 258 to 280 (WWGI…YALV), 296 to 312 (IGII…GIAL), 416 to 440 (LAVG…VTFL), 453 to 476 (CAPL…GVAA), and 502 to 521 (MITL…MAIC).

It belongs to the complex I subunit 4 family. In terms of assembly, FHL comprises of a formate dehydrogenase, unidentified electron carriers and a hydrogenase (isoenzyme 3). In this non-energy conserving pathway molecular hydrogen and carbodioxide from formate are released.

It is found in the cell inner membrane. The chain is Formate hydrogenlyase subunit 3 (hycC) from Escherichia coli (strain K12).